The sequence spans 300 residues: Alpha-tubulin N-acetyltransferase 1 (300 aa).

The 190-residue stretch at 1–190 folds into the N-acetyltransferase domain; that stretch reads MEFPFDVDAL…NNFVIFEGFF (190 aa). At lysine 56 the chain carries N6-acetyllysine; by autocatalysis. 124-137 contributes to the acetyl-CoA binding site; sequence FYIHESLQRHGHGR. Position 146 is an N6-acetyllysine; by autocatalysis (lysine 146). Acetyl-CoA is bound at residue 160 to 169; sequence SQKLLKFLNK. An N6-acetyllysine; by autocatalysis mark is found at lysine 210 and lysine 221. 2 disordered regions span residues 229 to 263 and 280 to 300; these read PLNR…RPFV and TARL…RRTR. Phosphoserine is present on residues serine 249 and serine 253. Residue arginine 282 is modified to Asymmetric dimethylarginine. Serine 292 bears the Phosphoserine mark. Position 300 is an omega-N-methylarginine (arginine 300).

This sequence belongs to the acetyltransferase ATAT1 family. As to quaternary structure, component of the BBSome complex. Interacts with AP2 alpha-adaptins, including AP2A2, but not with AP1 gamma-adaptin (AP1G1/AP1G2); this interaction is required for efficient alpha-tubulin acetylation, hence clathrin-coated pits are sites of microtubule acetylation. Autoacetylation strongly increases tubulin acetylation.

Its subcellular location is the cytoplasm. It localises to the membrane. It is found in the clathrin-coated pit. The protein resides in the cell junction. The protein localises to the focal adhesion. Its subcellular location is the cell projection. It localises to the axon. It is found in the cytoskeleton. The protein resides in the spindle. It carries out the reaction L-lysyl-[alpha-tubulin] + acetyl-CoA = N(6)-acetyl-L-lysyl-[alpha-tubulin] + CoA + H(+). Its function is as follows. Specifically acetylates 'Lys-40' in alpha-tubulin on the lumenal side of microtubules. Promotes microtubule destabilization and accelerates microtubule dynamics; this activity may be independent of acetylation activity. Acetylates alpha-tubulin with a slow enzymatic rate, due to a catalytic site that is not optimized for acetyl transfer. Enters the microtubule through each end and diffuses quickly throughout the lumen of microtubules. Acetylates only long/old microtubules because of its slow acetylation rate since it does not have time to act on dynamically unstable microtubules before the enzyme is released. Required for normal sperm flagellar function. Promotes directional cell locomotion and chemotaxis, through AP2A2-dependent acetylation of alpha-tubulin at clathrin-coated pits that are concentrated at the leading edge of migrating cells. May facilitate primary cilium assembly. This chain is Alpha-tubulin N-acetyltransferase 1, found in Sus scrofa (Pig).